A 188-amino-acid chain; its full sequence is dCTP deaminase (188 aa).

DCTP contacts are provided by residues 111–116 (KSTYAR), 135–137 (TLE), Gln-156, Tyr-170, and Gln-180. Glu-137 acts as the Proton donor/acceptor in catalysis.

The protein belongs to the dCTP deaminase family. In terms of assembly, homotrimer.

The catalysed reaction is dCTP + H2O + H(+) = dUTP + NH4(+). The protein operates within pyrimidine metabolism; dUMP biosynthesis; dUMP from dCTP (dUTP route): step 1/2. Functionally, catalyzes the deamination of dCTP to dUTP. The protein is dCTP deaminase of Pseudomonas fluorescens (strain SBW25).